The chain runs to 217 residues: Large ribosomal subunit protein uL1 (217 aa).

The protein belongs to the universal ribosomal protein uL1 family. As to quaternary structure, part of the 50S ribosomal subunit.

Functionally, binds directly to 23S rRNA. Probably involved in E site tRNA release. In terms of biological role, protein L1 is also a translational repressor protein, it controls the translation of its operon by binding to its mRNA. This is Large ribosomal subunit protein uL1 from Aeropyrum pernix (strain ATCC 700893 / DSM 11879 / JCM 9820 / NBRC 100138 / K1).